A 1384-amino-acid polypeptide reads, in one-letter code: DNA-directed RNA polymerase subunit beta (1384 aa).

It belongs to the RNA polymerase beta chain family. The RNAP catalytic core consists of 2 alpha, 1 beta, 1 beta' and 1 omega subunit. When a sigma factor is associated with the core the holoenzyme is formed, which can initiate transcription.

It carries out the reaction RNA(n) + a ribonucleoside 5'-triphosphate = RNA(n+1) + diphosphate. Its function is as follows. DNA-dependent RNA polymerase catalyzes the transcription of DNA into RNA using the four ribonucleoside triphosphates as substrates. The chain is DNA-directed RNA polymerase subunit beta from Stenotrophomonas maltophilia (strain R551-3).